A 706-amino-acid polypeptide reads, in one-letter code: Polyribonucleotide nucleotidyltransferase (706 aa).

The Mg(2+) site is built by D487 and D493. In terms of domain architecture, KH spans P553–I612. Residues G622–K692 enclose the S1 motif domain.

The protein belongs to the polyribonucleotide nucleotidyltransferase family. Mg(2+) is required as a cofactor.

The protein localises to the cytoplasm. It carries out the reaction RNA(n+1) + phosphate = RNA(n) + a ribonucleoside 5'-diphosphate. Its function is as follows. Involved in mRNA degradation. Catalyzes the phosphorolysis of single-stranded polyribonucleotides processively in the 3'- to 5'-direction. The polypeptide is Polyribonucleotide nucleotidyltransferase (Neisseria meningitidis serogroup A / serotype 4A (strain DSM 15465 / Z2491)).